The following is a 551-amino-acid chain: Urocanate hydratase (551 aa).

Residues 48–49 (GG), Q126, 172–174 (GMG), E192, R197, 238–239 (NA), 259–263 (QTSAH), 269–270 (YI), and Y318 each bind NAD(+). C406 is an active-site residue. G488 lines the NAD(+) pocket.

Belongs to the urocanase family. NAD(+) is required as a cofactor.

The protein resides in the cytoplasm. It carries out the reaction 4-imidazolone-5-propanoate = trans-urocanate + H2O. Its pathway is amino-acid degradation; L-histidine degradation into L-glutamate; N-formimidoyl-L-glutamate from L-histidine: step 2/3. Its function is as follows. Catalyzes the conversion of urocanate to 4-imidazolone-5-propionate. The protein is Urocanate hydratase of Geobacillus kaustophilus (strain HTA426).